We begin with the raw amino-acid sequence, 1253 residues long: MKKTLQDEIEAILRKRIMVLDGGMGTMIQRYKLSEENFQGQEFKDHSRPLKGNNDILSITQPDVIYQIHKEYLLAGADIIETNTFSSTSIAQADYGLEHLAYRMNKCSADVARKAAEEITLQTGVKRFVAGSLGPTNKTLSVSPSVERPDYRNITFDELVEAYQEQAKGLLDGGVDILLIETIFDTANAKAALFALQKLFEENYASPRPIFISGTIVDKSGRTLSGQTGEAFVTSVSHSDPLCIGLNCALGAAEMRPFIETIGKCTTAYVLCYPNAGLPNTFGDYDETPAMMAMHLKDFAVDGLVNVVGGCCGSTPDHIREIAEAVKNCKPRVPPDSVFEGHMLLSGLEPFRIGPYTNFVNIGERCNVAGSKKFAKLIMAGNYEEALSVAKVQVEMGAQVLDINMDDGMLDGPSAMTKFCNFIASEPDIAKVPLCIDSSNFAVIEAGLKCCQGKCIVNSISLKEGEEDFLEKARKIKKFGAAVVVMAFDEEGQATETDVKVSVCTRAYHLLVEKVGFNPNDIIFDPNILTIGTGMEEHNLYAINFIHATRVIKETLPGVRISGGLSNLSFAFRGMDAIREAMHGVFLYHAIKFGMDMGIVNAGSLPVYDDIHKDLLQLCEDLIWNRDAEATEKLLRYAQTHGKGGKKVIQTDEWRNGSIEERLEYALVKGIEKHIVEDTEEARLNREKYPRPLNIIEGPLMNGMKVVGDLFGAGKMFLPQVIKSARVMKKAVGHLIPFMEKEREEARVLNGSVEEEDPYQGTIVLATVKGDVHDIGKNIVGVVLGCNNFRVIDLGVMTPCDKILQAALDHKADIIGLSGLITPSLDEMIFVAKEMERLAIKIPLLIGGATTSRTHTAVKIAPRYSAPVIHVLDASKSVVVCSQLLDENLKDDYFEEILEEYEDIRQDHYESLKERKYLPLSQARKHSFHIDWLSEPHPVKPTFIGTQVFEDYNLQKLVDYIDWKPFFDVWQLRGKYPNRGFPKIFNDKAVGEEARKVYEDAQNMLSILISRKKLRARGVVGFWPAQSVQDDIHLYAEGAVPQAAEPIATFYGLRQQAEKDSSSTDPYHCLSDFVAPLHSGVRDYLGLFAVACFGVEELSKAYEDDGDDYSSIMVKALGDRLAEAFAEELHERVRRELWAYCGSEQLGVTDLRKLRYEGIRPAPGYPSQPDHTEKLTMWRLANIEQATGIRLTESLAMAPASAVSGLYFSNVKSKYFAVGKISKDQIEDYALRKNMSVAEVEKWLGPILGYDTD.

In terms of domain architecture, Hcy-binding spans 6-326 (QDEIEAILRK…DHIREIAEAV (321 aa)). Zn(2+)-binding residues include Cys-248, Cys-311, and Cys-312. The 262-residue stretch at 359–620 (FVNIGERCNV…IHKDLLQLCE (262 aa)) folds into the Pterin-binding domain. Residues 370–372 (GSK), Asp-437, Asn-458, Asp-525, Asn-567, Arg-573, and Arg-579 contribute to the (6S)-5,6,7,8-tetrahydrofolate site. The B12-binding N-terminal domain maps to 650–747 (QTDEWRNGSI…FMEKEREEAR (98 aa)). Methylcob(III)alamin is bound by residues Glu-697, 770–774 (GDVHD), His-773, Ser-818, Thr-822, and Ala-874. Residues 760-895 (QGTIVLATVK…DENLKDDYFE (136 aa)) enclose the B12-binding domain. In terms of domain architecture, AdoMet activation spans 911 to 1253 (SLKERKYLPL…LGPILGYDTD (343 aa)). Residues Asp-962, Arg-1160, and 1215–1216 (YF) each bind S-adenosyl-L-methionine. Thr-1252 carries the phosphothreonine modification.

It belongs to the vitamin-B12 dependent methionine synthase family. As to quaternary structure, monomer. Dimer. Forms a multiprotein complex with MMACHC, MMADHC and MTRR. The cofactor is methylcob(III)alamin. It depends on Zn(2+) as a cofactor.

The protein localises to the cytoplasm. The enzyme catalyses (6S)-5-methyl-5,6,7,8-tetrahydrofolate + L-homocysteine = (6S)-5,6,7,8-tetrahydrofolate + L-methionine. The protein operates within amino-acid biosynthesis; L-methionine biosynthesis via de novo pathway; L-methionine from L-homocysteine (MetH route): step 1/1. In terms of biological role, catalyzes the transfer of a methyl group from methylcob(III)alamin (MeCbl) to homocysteine, yielding enzyme-bound cob(I)alamin and methionine in the cytosol. MeCbl is an active form of cobalamin (vitamin B12) used as a cofactor for methionine biosynthesis. Cob(I)alamin form is regenerated to MeCbl by a transfer of a methyl group from 5-methyltetrahydrofolate. The processing of cobalamin in the cytosol occurs in a multiprotein complex composed of at least MMACHC, MMADHC, MTRR (methionine synthase reductase) and MTR which may contribute to shuttle safely and efficiently cobalamin towards MTR in order to produce methionine. The chain is Methionine synthase (Mtr) from Rattus norvegicus (Rat).